The sequence spans 282 residues: DNA-3-methyladenine glycosylase 2 (282 aa).

Asp238 (proton acceptor) is an active-site residue.

This sequence belongs to the alkylbase DNA glycosidase AlkA family. Monomer.

It catalyses the reaction Hydrolysis of alkylated DNA, releasing 3-methyladenine, 3-methylguanine, 7-methylguanine and 7-methyladenine.. Hydrolysis of the deoxyribose N-glycosidic bond to excise 3-methyladenine, 3-methylguanine, 7-methylguanine, O2-methylthymine, and O2-methylcytosine from the damaged DNA polymer formed by alkylation lesions. This is DNA-3-methyladenine glycosylase 2 (alkA) from Escherichia coli (strain K12).